Consider the following 509-residue polypeptide: Ribonuclease Y (509 aa).

A helical transmembrane segment spans residues 5 to 25 (IIILLSVFCGIFFICFIICSS). One can recognise a KH domain in the interval 199 to 259 (TTNIVKLPSD…IRREIATRTL (61 aa)). The 94-residue stretch at 325–418 (VLAHSIEVAK…VAIADSISAS (94 aa)) folds into the HD domain.

It belongs to the RNase Y family.

It is found in the cell membrane. Functionally, endoribonuclease that initiates mRNA decay. This Mycoplasma capricolum subsp. capricolum (strain California kid / ATCC 27343 / NCTC 10154) protein is Ribonuclease Y.